The sequence spans 392 residues: LL-diaminopimelate aminotransferase (392 aa).

2 residues coordinate substrate: tyrosine 13 and glycine 38. Pyridoxal 5'-phosphate contacts are provided by residues tyrosine 67, 102-103 (SK), tyrosine 127, asparagine 177, tyrosine 208, and 236-238 (SCS). Residues lysine 103, tyrosine 127, and asparagine 177 each coordinate substrate. Lysine 239 is subject to N6-(pyridoxal phosphate)lysine. A pyridoxal 5'-phosphate-binding site is contributed by arginine 247. Arginine 366 is a substrate binding site.

The protein belongs to the class-I pyridoxal-phosphate-dependent aminotransferase family. LL-diaminopimelate aminotransferase subfamily. Homodimer. Requires pyridoxal 5'-phosphate as cofactor.

The enzyme catalyses (2S,6S)-2,6-diaminopimelate + 2-oxoglutarate = (S)-2,3,4,5-tetrahydrodipicolinate + L-glutamate + H2O + H(+). Its pathway is amino-acid biosynthesis; L-lysine biosynthesis via DAP pathway; LL-2,6-diaminopimelate from (S)-tetrahydrodipicolinate (aminotransferase route): step 1/1. Its function is as follows. Involved in the synthesis of meso-diaminopimelate (m-DAP or DL-DAP), required for both lysine and peptidoglycan biosynthesis. Catalyzes the direct conversion of tetrahydrodipicolinate to LL-diaminopimelate. Can also use m-DAP instead of LL-DAP as the amino-group donor. The polypeptide is LL-diaminopimelate aminotransferase (Gloeobacter violaceus (strain ATCC 29082 / PCC 7421)).